The sequence spans 97 residues: Large ribosomal subunit protein eL21 (97 aa).

Polar residues predominate over residues 1–12 (MPSSNGPRQATR). The interval 1-35 (MPSSNGPRQATRNKLKNDARERGTSPPQRSIEEYD) is disordered.

Belongs to the eukaryotic ribosomal protein eL21 family.

In Natronomonas pharaonis (strain ATCC 35678 / DSM 2160 / CIP 103997 / JCM 8858 / NBRC 14720 / NCIMB 2260 / Gabara) (Halobacterium pharaonis), this protein is Large ribosomal subunit protein eL21.